Consider the following 266-residue polypeptide: Streptomycin 3''-kinase (266 aa).

Asp-154 serves as the catalytic Proton acceptor.

It belongs to the aminoglycoside phosphotransferase family.

It carries out the reaction streptomycin + ATP = streptomycin 3''-phosphate + ADP + H(+). In terms of biological role, the aminoglycoside phosphotransferases achieve inactivation of their antibiotic substrates by phosphorylation. In Klebsiella pneumoniae, this protein is Streptomycin 3''-kinase (str).